A 155-amino-acid chain; its full sequence is Ribosome maturation factor RimP (155 aa).

It belongs to the RimP family.

The protein localises to the cytoplasm. In terms of biological role, required for maturation of 30S ribosomal subunits. In Bacteroides thetaiotaomicron (strain ATCC 29148 / DSM 2079 / JCM 5827 / CCUG 10774 / NCTC 10582 / VPI-5482 / E50), this protein is Ribosome maturation factor RimP.